Reading from the N-terminus, the 226-residue chain is Octanoyltransferase (226 aa).

Residues 34-212 (LAAPDVLLTL…AFSRVFGLEF (179 aa)) enclose the BPL/LPL catalytic domain. Substrate contacts are provided by residues 76–83 (RGGDVTYH), 143–145 (AIG), and 156–158 (GIA). The active-site Acyl-thioester intermediate is cysteine 174.

It belongs to the LipB family.

It localises to the cytoplasm. The catalysed reaction is octanoyl-[ACP] + L-lysyl-[protein] = N(6)-octanoyl-L-lysyl-[protein] + holo-[ACP] + H(+). The protein operates within protein modification; protein lipoylation via endogenous pathway; protein N(6)-(lipoyl)lysine from octanoyl-[acyl-carrier-protein]: step 1/2. Functionally, catalyzes the transfer of endogenously produced octanoic acid from octanoyl-acyl-carrier-protein onto the lipoyl domains of lipoate-dependent enzymes. Lipoyl-ACP can also act as a substrate although octanoyl-ACP is likely to be the physiological substrate. The protein is Octanoyltransferase of Thermosynechococcus vestitus (strain NIES-2133 / IAM M-273 / BP-1).